Reading from the N-terminus, the 400-residue chain is 3-hydroxybenzoate 6-hydroxylase (400 aa).

This sequence belongs to the 3-hydroxybenzoate 6-hydroxylase family. Monomer. The cofactor is FAD.

It catalyses the reaction 3-hydroxybenzoate + NADH + O2 + H(+) = 2,5-dihydroxybenzoate + NAD(+) + H2O. Its function is as follows. Catalyzes the NAD- or NADP-dependent conversion of 3-hydroxybenzoate to gentisate. The affinity of the enzyme toward NAD is twice as high as for NADP. The polypeptide is 3-hydroxybenzoate 6-hydroxylase (nagX) (Polaromonas naphthalenivorans (strain CJ2)).